Here is a 59-residue protein sequence, read N- to C-terminus: Small ribosomal subunit protein bS21 (59 aa).

The tract at residues 34–59 (KHEHYEKPSVKRKKKSEAARRRKRSF) is disordered. The span at 43-59 (VKRKKKSEAARRRKRSF) shows a compositional bias: basic residues.

The protein belongs to the bacterial ribosomal protein bS21 family.

This Desulforudis audaxviator (strain MP104C) protein is Small ribosomal subunit protein bS21.